Consider the following 118-residue polypeptide: Superoxide-generating NADPH oxidase light chain subunit (118 aa).

4 helical membrane passes run tryptophan 9–isoleucine 29, isoleucine 36–phenylalanine 56, alanine 62–tyrosine 82, and phenylalanine 83–isoleucine 103.

This sequence belongs to the p22phox family. Composed of a heavy chain and a light chain.

The protein localises to the cell membrane. In terms of biological role, critical component of the membrane-bound oxidase of phagocytes that generates superoxide. In Dictyostelium discoideum (Social amoeba), this protein is Superoxide-generating NADPH oxidase light chain subunit (cybA).